A 539-amino-acid chain; its full sequence is Gamma-2-syntrophin (539 aa).

In terms of domain architecture, PDZ spans 73–156 (TVTLRRQPVG…EVTITVEYLR (84 aa)). Composition is skewed to low complexity over residues 168-183 (SPGP…SSPL) and 194-205 (SSTTAPSSPSSP). The interval 168–209 (SPGPSSDHSSGASSPLFDSGLHLNGNSSTTAPSSPSSPIAKD) is disordered. The PH domain maps to 296-421 (QVVHMGWVNE…WEKSFQRATF (126 aa)).

The protein belongs to the syntrophin family. In terms of assembly, interacts with the dystrophin protein DMD and related proteins DTNA and DTNB. Widely expressed. Strong expression in brain and testis. In CNS, it is expressed in the perikaryon and proximal portion of the neuronal processes. Strong expression in the hippocampus, neuron-rich dendate granule cells, and pyramidal cell layers. Highly expressed in neurons of the cerebral cortex. Also expressed in the cerebellar cortex, deep cerebellar nuclei, thalamus, and basal ganglia.

It localises to the cell membrane. The protein resides in the sarcolemma. It is found in the cytoplasm. The protein localises to the cytoskeleton. Functionally, adapter protein that binds to and probably organizes the subcellular localization of a variety of proteins. May link various receptors to the actin cytoskeleton and the dystrophin glycoprotein complex. The chain is Gamma-2-syntrophin (SNTG2) from Homo sapiens (Human).